The chain runs to 414 residues: MSQKIQGGSVVEMQGDEMTRIIWELIKEKLIFPYVELDLHSYDLGIENRDATNDQVTKDAAEAIKKYNVGVKCATITPDEKRVEEFKLKQMWKSPNGTIRNILGGTVFREAIICKNIPRLVSGWVKPIIIGRHAYGDQYRATDFVVPGPGKVEISYTPSDGSPKTVYLVHNFTESGGVAMGMYNQDKSIEDFAHSSFQMALSKNWPLYLSTKNTILKKYDGRFKDIFQEIYDKQYKSEFEAQNIWYEHRLIDDMVAQAMKSEGGFIWACKNYDGDVQSDSVAQGYGSLGMMTSVLVCPDGKTVEAEAAHGTVTRHYRMYQKGQETLTNPIASIFAWTRGLAHRAKLDNNKELSFFAKALEEVCIETIEAGFMTKDLAACIKGLPNVQRSDYLNTFEFMDKLGENLQLKLAQAKL.

At Ser-2 the chain carries N-acetylserine. Tyr-42 is subject to Phosphotyrosine. 75-77 (TIT) lines the NADP(+) pocket. Thr-77 is a substrate binding site. At Lys-81 the chain carries N6-acetyllysine. Arg-82 serves as a coordination point for NADP(+). Substrate contacts are provided by residues 94-100 (SPNGTIR) and Arg-109. Lys-126 carries the N6-succinyllysine modification. Positions 132 and 212 each coordinate substrate. An N6-acetyllysine mark is found at Lys-224 and Lys-233. Asp-252 contributes to the Mn(2+) binding site. Lys-260 contributes to the NADP(+) binding site. Positions 275 and 279 each coordinate Mn(2+). 310-315 (GTVTRH) is a binding site for NADP(+). Lys-321 is subject to N6-acetyllysine. NADP(+) is bound at residue Asn-328. Ser-389 bears the Phosphoserine mark. Lys-400 carries the N6-succinyllysine modification.

This sequence belongs to the isocitrate and isopropylmalate dehydrogenases family. Homodimer. The cofactor is Mg(2+). Mn(2+) is required as a cofactor. In terms of processing, acetylation at Lys-374 dramatically reduces catalytic activity. As to expression, expressed preferentially in corneal epithelium. Constitute approximately 13% of the total soluble bovine corneal epithelial proteins.

It localises to the cytoplasm. It is found in the cytosol. It catalyses the reaction D-threo-isocitrate + NADP(+) = 2-oxoglutarate + CO2 + NADPH. Its function is as follows. Catalyzes the NADP(+)-dependent oxidative decarboxylation of isocitrate (D-threo-isocitrate) to 2-ketoglutarate (2-oxoglutarate), which is required by other enzymes such as the phytanoyl-CoA dioxygenase. Plays a critical role in the generation of NADPH, an important cofactor in many biosynthesis pathways. May act as a corneal epithelial crystallin and may be involved in maintaining corneal epithelial transparency. The chain is Isocitrate dehydrogenase [NADP] cytoplasmic (IDH1) from Bos taurus (Bovine).